Reading from the N-terminus, the 336-residue chain is D-erythrose-4-phosphate dehydrogenase (336 aa).

Position 11–12 (11–12) interacts with NAD(+); it reads RI. Substrate contacts are provided by residues 153-155, Arg199, 212-213, and Arg235; these read SCT and TK. The active-site Nucleophile is the Cys154. Asn317 is a binding site for NAD(+).

Belongs to the glyceraldehyde-3-phosphate dehydrogenase family. Epd subfamily. Homotetramer.

The protein localises to the cytoplasm. The enzyme catalyses D-erythrose 4-phosphate + NAD(+) + H2O = 4-phospho-D-erythronate + NADH + 2 H(+). It participates in cofactor biosynthesis; pyridoxine 5'-phosphate biosynthesis; pyridoxine 5'-phosphate from D-erythrose 4-phosphate: step 1/5. Functionally, catalyzes the NAD-dependent conversion of D-erythrose 4-phosphate to 4-phosphoerythronate. This chain is D-erythrose-4-phosphate dehydrogenase, found in Aeromonas salmonicida (strain A449).